The sequence spans 74 residues: Acyl carrier protein (74 aa).

The Carrier domain maps to 1-73 (MAVFEKVQEI…DLVAYVEEQA (73 aa)). The residue at position 35 (serine 35) is an O-(pantetheine 4'-phosphoryl)serine.

The protein belongs to the acyl carrier protein (ACP) family. 4'-phosphopantetheine is transferred from CoA to a specific serine of apo-ACP by AcpS. This modification is essential for activity because fatty acids are bound in thioester linkage to the sulfhydryl of the prosthetic group.

Its subcellular location is the cytoplasm. Its pathway is lipid metabolism; fatty acid biosynthesis. Its function is as follows. Carrier of the growing fatty acid chain in fatty acid biosynthesis. The sequence is that of Acyl carrier protein from Streptococcus pneumoniae serotype 4 (strain ATCC BAA-334 / TIGR4).